The chain runs to 733 residues: Centrosomal protein of 68 kDa (733 aa).

Positions 71–80 are enriched in basic and acidic residues; sequence SKEPVADRSK. Disordered stretches follow at residues 71–92, 150–207, and 222–244; these read SKEP…SASV, GLSQ…SFAN, and VVGA…DATG. Residues 178–190 show a composition bias toward low complexity; it reads SSRSISASSVGSS. Residues 231-241 show a composition bias toward polar residues; sequence GSAQPLTSGSD. A Phosphoserine modification is found at S315. Residues 420–442 are disordered; sequence PQLKTKEKEPPFPRQKRGRQHVS. Phosphoserine occurs at positions 453 and 459. Residues 497–571 are disordered; the sequence is HSSLQVSDSD…KPLKTQPASK (75 aa). Over residues 540 to 569 the composition is skewed to polar residues; it reads IQPQDSRGKSSLMSNQTLGVSSKPLKTQPA.

Interacts with CNTLN; the interaction recruits CEP68 to the centrosome. Interacts with the SCF(FBXW11) complex which contains SKP1, CUL1 and FBXW11; the interaction is probably mediated by FBXW11 and the complex also contains CDK5RAP2 and PCNT. Also interacts with F-box protein BTRC. Interacts with serine/threonine-protein kinase PLK1; the interaction leads to phosphorylation of CEP68 and its subsequent degradation. Interacts with NEK2; the interaction leads to phosphorylation of CEP68. In terms of processing, phosphorylation by PLK1 is required for binding to BTRC in prometaphase. Phosphorylated directly or indirectly by NEK2. NEK2-mediated phosphorylation promotes CEP68 dissociation from the centrosome and its degradation at the onset of mitosis. Ubiquitinated and targeted for proteasomal degradation in early mitosis by the SCF(BTRC) and/or SCF(FBXW11) E3 ubiquitin-protein ligase complexes. Degradation is complete by prometaphase and is required for removal of CDK5RAP2 from the peripheral pericentriolar material and subsequent centriole separation.

The protein localises to the cytoplasm. The protein resides in the cytoskeleton. It localises to the microtubule organizing center. Its subcellular location is the centrosome. Involved in maintenance of centrosome cohesion, probably as part of a linker structure which prevents centrosome splitting. Required for localization of CDK5RAP2 to the centrosome during interphase. Contributes to CROCC/rootletin filament formation. This chain is Centrosomal protein of 68 kDa (Cep68), found in Mus musculus (Mouse).